A 205-amino-acid chain; its full sequence is MIDFVEGTLSYLDSEYIVIETGGIGYRLFCPNPYQFVRYEGNKTKLFTHHHVREDAILLYGFATRDERDLFRKLLDVSGIGPKGGLAILAAATPEQLVMAVQQENVTYLTKFPGIGKKTAQRIILDLKDKLVGYTPSAILTVAAGDLTAGEQAVSALNEALDALTALGYSDGELQKIRNTLSEKSKEGDGVEKLIKQGLALLMRG.

Residues 1–63 (MIDFVEGTLS…EDAILLYGFA (63 aa)) form a domain I region. Residues 64–142 (TRDERDLFRK…GYTPSAILTV (79 aa)) are domain II. The flexible linker stretch occupies residues 143–153 (AAGDLTAGEQA). The segment at 153–205 (AVSALNEALDALTALGYSDGELQKIRNTLSEKSKEGDGVEKLIKQGLALLMRG) is domain III.

It belongs to the RuvA family. As to quaternary structure, homotetramer. Forms an RuvA(8)-RuvB(12)-Holliday junction (HJ) complex. HJ DNA is sandwiched between 2 RuvA tetramers; dsDNA enters through RuvA and exits via RuvB. An RuvB hexamer assembles on each DNA strand where it exits the tetramer. Each RuvB hexamer is contacted by two RuvA subunits (via domain III) on 2 adjacent RuvB subunits; this complex drives branch migration. In the full resolvosome a probable DNA-RuvA(4)-RuvB(12)-RuvC(2) complex forms which resolves the HJ.

It localises to the cytoplasm. In terms of biological role, the RuvA-RuvB-RuvC complex processes Holliday junction (HJ) DNA during genetic recombination and DNA repair, while the RuvA-RuvB complex plays an important role in the rescue of blocked DNA replication forks via replication fork reversal (RFR). RuvA specifically binds to HJ cruciform DNA, conferring on it an open structure. The RuvB hexamer acts as an ATP-dependent pump, pulling dsDNA into and through the RuvAB complex. HJ branch migration allows RuvC to scan DNA until it finds its consensus sequence, where it cleaves and resolves the cruciform DNA. This Brevibacillus brevis (strain 47 / JCM 6285 / NBRC 100599) protein is Holliday junction branch migration complex subunit RuvA.